Here is a 627-residue protein sequence, read N- to C-terminus: UvrABC system protein C (627 aa).

Positions 26–105 constitute a GIY-YIG domain; it reads PSPGVYQFRN…IKELKPRYNV (80 aa). In terms of domain architecture, UVR spans 219-254; the sequence is STMIRSLTSAMQLFARELKFERAAEIKMQLESLKRY.

It belongs to the UvrC family. Interacts with UvrB in an incision complex.

It localises to the cytoplasm. Functionally, the UvrABC repair system catalyzes the recognition and processing of DNA lesions. UvrC both incises the 5' and 3' sides of the lesion. The N-terminal half is responsible for the 3' incision and the C-terminal half is responsible for the 5' incision. The sequence is that of UvrABC system protein C from Pelodictyon phaeoclathratiforme (strain DSM 5477 / BU-1).